A 1266-amino-acid chain; its full sequence is Formin-like protein 13 (1266 aa).

The Phosphatase tensin-type domain maps to tyrosine 9 to serine 193. Cysteine 126 serves as the catalytic Phosphocysteine intermediate. One can recognise a C2 tensin-type domain in the interval aspartate 199 to methionine 337. 4 disordered regions span residues lysine 497–serine 568, lysine 597–arginine 825, serine 881–glutamate 902, and glutamine 1210–proline 1266. A compositionally biased stretch (pro residues) spans proline 529–valine 538. Polar residues predominate over residues glutamate 617–valine 644. Pro residues-rich tracts occupy residues leucine 686–methionine 698, valine 706–proline 742, proline 754–leucine 781, and proline 806–proline 815. The FH2 domain maps to valine 829–lysine 1226. Composition is skewed to basic and acidic residues over residues glycine 889–glutamate 902, glutamine 1210–lysine 1248, and glutamate 1255–proline 1266.

It belongs to the formin-like family. Class-II subfamily.

The polypeptide is Formin-like protein 13 (FH13) (Arabidopsis thaliana (Mouse-ear cress)).